The primary structure comprises 368 residues: Histidinol-phosphate aminotransferase (368 aa).

Residue lysine 229 is modified to N6-(pyridoxal phosphate)lysine.

The protein belongs to the class-II pyridoxal-phosphate-dependent aminotransferase family. Histidinol-phosphate aminotransferase subfamily. In terms of assembly, homodimer. It depends on pyridoxal 5'-phosphate as a cofactor.

The enzyme catalyses L-histidinol phosphate + 2-oxoglutarate = 3-(imidazol-4-yl)-2-oxopropyl phosphate + L-glutamate. It functions in the pathway amino-acid biosynthesis; L-histidine biosynthesis; L-histidine from 5-phospho-alpha-D-ribose 1-diphosphate: step 7/9. This is Histidinol-phosphate aminotransferase from Acidovorax sp. (strain JS42).